The following is a 701-amino-acid chain: Elongation factor G (701 aa).

A tr-type G domain is found at 6–286; sequence KFTRNIGIAA…YVMELLPSPL (281 aa). Residues 15-22, 83-87, and 137-140 contribute to the GTP site; these read AHIDAGKT, DTPGH, and NKMD.

This sequence belongs to the TRAFAC class translation factor GTPase superfamily. Classic translation factor GTPase family. EF-G/EF-2 subfamily.

Its subcellular location is the cytoplasm. In terms of biological role, catalyzes the GTP-dependent ribosomal translocation step during translation elongation. During this step, the ribosome changes from the pre-translocational (PRE) to the post-translocational (POST) state as the newly formed A-site-bound peptidyl-tRNA and P-site-bound deacylated tRNA move to the P and E sites, respectively. Catalyzes the coordinated movement of the two tRNA molecules, the mRNA and conformational changes in the ribosome. This is Elongation factor G from Cytophaga hutchinsonii (strain ATCC 33406 / DSM 1761 / CIP 103989 / NBRC 15051 / NCIMB 9469 / D465).